Consider the following 287-residue polypeptide: Nucleotide-binding protein Sfri_3380 (287 aa).

ATP is bound at residue 8–15 (GRSGSGKS). 56–59 (DVRN) lines the GTP pocket.

The protein belongs to the RapZ-like family.

Displays ATPase and GTPase activities. The sequence is that of Nucleotide-binding protein Sfri_3380 from Shewanella frigidimarina (strain NCIMB 400).